Consider the following 1008-residue polypeptide: Translation initiation factor IF-2 (1008 aa).

3 disordered regions span residues 113–136 (AVTA…KGNV), 153–235 (DKDS…PAAP), and 253–405 (GLTV…YRKD). Basic and acidic residues-rich tracts occupy residues 153–180 (DKDS…KAKP) and 189–213 (PKPE…KAET). 2 stretches are compositionally biased toward low complexity: residues 294–329 (GPNK…PRPQ) and 342–358 (GGPN…SNGP). The segment covering 365–381 (ASEKGEVTGKQIQDKIK) has biased composition (basic and acidic residues). The 171-residue stretch at 507 to 677 (DRAPIVTIMG…LLEAEMLELK (171 aa)) folds into the tr-type G domain. The G1 stretch occupies residues 516–523 (GHVDHGKT). 516–523 (GHVDHGKT) is a GTP binding site. Residues 541-545 (GITQH) are G2. The tract at residues 563 to 566 (DTPG) is G3. GTP is bound by residues 563–567 (DTPGH) and 617–620 (NKID). Residues 617 to 620 (NKID) are G4. The segment at 653-655 (SAK) is G5.

This sequence belongs to the TRAFAC class translation factor GTPase superfamily. Classic translation factor GTPase family. IF-2 subfamily.

The protein resides in the cytoplasm. In terms of biological role, one of the essential components for the initiation of protein synthesis. Protects formylmethionyl-tRNA from spontaneous hydrolysis and promotes its binding to the 30S ribosomal subunits. Also involved in the hydrolysis of GTP during the formation of the 70S ribosomal complex. This is Translation initiation factor IF-2 from Cytophaga hutchinsonii (strain ATCC 33406 / DSM 1761 / CIP 103989 / NBRC 15051 / NCIMB 9469 / D465).